The primary structure comprises 288 residues: Homoserine kinase (288 aa).

An ATP-binding site is contributed by Pro79–Ala89.

This sequence belongs to the GHMP kinase family. Homoserine kinase subfamily.

It localises to the cytoplasm. The catalysed reaction is L-homoserine + ATP = O-phospho-L-homoserine + ADP + H(+). It participates in amino-acid biosynthesis; L-threonine biosynthesis; L-threonine from L-aspartate: step 4/5. Catalyzes the ATP-dependent phosphorylation of L-homoserine to L-homoserine phosphate. This chain is Homoserine kinase, found in Listeria innocua serovar 6a (strain ATCC BAA-680 / CLIP 11262).